Here is a 1145-residue protein sequence, read N- to C-terminus: DNA polymerase subunit gamma-1, mitochondrial (1145 aa).

A mitochondrion-targeting transit peptide spans 1-9 (MQFHLIRKY).

It belongs to the DNA polymerase type-A family. Component of the DNA polymerase gamma complex consisting of two subunits: the catalytic subunit DNApol-gamma/DNApolG1 and the accessory subunit PolG2/DNApol-gamma35. Requires Mg(2+) as cofactor.

It localises to the mitochondrion. The enzyme catalyses DNA(n) + a 2'-deoxyribonucleoside 5'-triphosphate = DNA(n+1) + diphosphate. With respect to regulation, stimulated by KCl, and inhibited by the small molecules o 2',3'-dideoxythymidine 5'-triphosphate (d2TTP) and N-ethylmaleimide (NEM). Its function is as follows. As the catalytic component of the DNA polymerase gamma complex is involved in the replication of mitochondrial DNA (mtDNA). Has both 5'-3' DNA polymerase and a highly mispair-specific 3'-5' exonuclease activity. At the end of mtDNA replication DNA ends are ligated to produce a closed circular mtDNA molecule, its exonuclease activity is required for formation of these ligatable ends by preventing DNA synthesis from continuing past the 5'-end of downstream DNA into duplex DNA regions. Does not possess DNA primase activity, does not catalyze strand displacement synthesis and does not contain a 5'-3' exonuclease activity to catalyze nick translation. Important for promoting the elimination of paternal mitochondrial DNA during spermatogenesis, however its exact role in this function has not yet been identified and appears to be independent of its 3'-5'-exonuclease activity and only partially dependent on its DNA polymerase activity. This chain is DNA polymerase subunit gamma-1, mitochondrial, found in Drosophila melanogaster (Fruit fly).